The sequence spans 430 residues: Long-chain specific acyl-CoA dehydrogenase, mitochondrial (430 aa).

Residues 1 to 30 constitute a mitochondrion transit peptide; sequence MAARLLRGSLRVLGGHRAPRQLPAARCSHS. The residue at position 42 (Lys-42) is an N6-acetyllysine. The residue at position 54 (Ser-54) is a Phosphoserine. N6-acetyllysine; alternate is present on residues Lys-66 and Lys-81. Residues Lys-66 and Lys-81 each carry the N6-succinyllysine; alternate modification. An N6-acetyllysine mark is found at Lys-92 and Lys-95. Residue Lys-165 is modified to N6-succinyllysine. Residues 170–179 and 203–205 contribute to the FAD site; these read IAMTEPGAGS and FIS. Ser-179 is a substrate binding site. 227 to 228 provides a ligand contact to substrate; sequence AH. An N6-succinyllysine modification is found at Lys-240. Lys-254 and Lys-279 each carry N6-acetyllysine; alternate. 2 positions are modified to N6-succinyllysine; alternate: Lys-254 and Lys-279. Substrate contacts are provided by residues Tyr-282 and 289–292; that span reads PQER. Glu-291 (proton acceptor) is an active-site residue. FAD is bound at residue Arg-317. Residue Lys-318 is modified to N6-acetyllysine. An N6-acetyllysine; alternate modification is found at Lys-322. Lys-322 carries the N6-succinyllysine; alternate modification. An FAD-binding site is contributed by Gln-328. Lys-358 is subject to N6-acetyllysine. The residue at position 362 (Ser-362) is a Phosphoserine. Position 385–389 (385–389) interacts with FAD; it reads QLHGG. Residue 412–413 participates in substrate binding; sequence GG. 414-416 contributes to the FAD binding site; sequence TNE.

It belongs to the acyl-CoA dehydrogenase family. Homotetramer. FAD is required as a cofactor. Post-translationally, acetylation at Lys-318 and Lys-322 in proximity of the cofactor-binding sites strongly reduces catalytic activity. These sites are deacetylated by SIRT3.

The protein resides in the mitochondrion matrix. It catalyses the reaction a long-chain 2,3-saturated fatty acyl-CoA + oxidized [electron-transfer flavoprotein] + H(+) = a long-chain (2E)-enoyl-CoA + reduced [electron-transfer flavoprotein]. It carries out the reaction hexanoyl-CoA + oxidized [electron-transfer flavoprotein] + H(+) = (2E)-hexenoyl-CoA + reduced [electron-transfer flavoprotein]. The catalysed reaction is octanoyl-CoA + oxidized [electron-transfer flavoprotein] + H(+) = (2E)-octenoyl-CoA + reduced [electron-transfer flavoprotein]. The enzyme catalyses decanoyl-CoA + oxidized [electron-transfer flavoprotein] + H(+) = (2E)-decenoyl-CoA + reduced [electron-transfer flavoprotein]. It catalyses the reaction dodecanoyl-CoA + oxidized [electron-transfer flavoprotein] + H(+) = (2E)-dodecenoyl-CoA + reduced [electron-transfer flavoprotein]. It carries out the reaction tetradecanoyl-CoA + oxidized [electron-transfer flavoprotein] + H(+) = (2E)-tetradecenoyl-CoA + reduced [electron-transfer flavoprotein]. The catalysed reaction is oxidized [electron-transfer flavoprotein] + hexadecanoyl-CoA + H(+) = (2E)-hexadecenoyl-CoA + reduced [electron-transfer flavoprotein]. The enzyme catalyses octadecanoyl-CoA + oxidized [electron-transfer flavoprotein] + H(+) = (2E)-octadecenoyl-CoA + reduced [electron-transfer flavoprotein]. It catalyses the reaction eicosanoyl-CoA + oxidized [electron-transfer flavoprotein] + H(+) = (2E)-eicosenoyl-CoA + reduced [electron-transfer flavoprotein]. It carries out the reaction docosanoyl-CoA + oxidized [electron-transfer flavoprotein] + H(+) = (2E)-docosenoyl-CoA + reduced [electron-transfer flavoprotein]. The catalysed reaction is tetracosanoyl-CoA + oxidized [electron-transfer flavoprotein] + H(+) = (2E)-tetracosenoyl-CoA + reduced [electron-transfer flavoprotein]. The enzyme catalyses (5E)-tetradecenoyl-CoA + oxidized [electron-transfer flavoprotein] + H(+) = (2E,5E)-tetradecadienoyl-CoA + reduced [electron-transfer flavoprotein]. It catalyses the reaction (5Z)-tetradecenoyl-CoA + oxidized [electron-transfer flavoprotein] + H(+) = (2E,5Z)-tetradecadienoyl-CoA + reduced [electron-transfer flavoprotein]. It carries out the reaction oxidized [electron-transfer flavoprotein] + (9Z)-octadecenoyl-CoA + H(+) = (2E,9Z)-octadecadienoyl-CoA + reduced [electron-transfer flavoprotein]. It participates in lipid metabolism; mitochondrial fatty acid beta-oxidation. In terms of biological role, long-chain specific acyl-CoA dehydrogenase is one of the acyl-CoA dehydrogenases that catalyze the first step of mitochondrial fatty acid beta-oxidation, an aerobic process breaking down fatty acids into acetyl-CoA and allowing the production of energy from fats. The first step of fatty acid beta-oxidation consists in the removal of one hydrogen from C-2 and C-3 of the straight-chain fatty acyl-CoA thioester, resulting in the formation of trans-2-enoyl-CoA. Among the different mitochondrial acyl-CoA dehydrogenases, long-chain specific acyl-CoA dehydrogenase can act on saturated and unsaturated acyl-CoAs with 6 to 24 carbons with a preference for 8 to 18 carbons long primary chains. In Homo sapiens (Human), this protein is Long-chain specific acyl-CoA dehydrogenase, mitochondrial.